The following is a 432-amino-acid chain: Neuronal pentraxin-1 (432 aa).

Residues 1–22 (MPAGRAARTCALLALCLLGAGA) form the signal peptide. Positions 90 to 122 (ESQSTLDPGAGEARAGGGRKQPGSGKNTMGDLS) are disordered. N154 and N193 each carry an N-linked (GlcNAc...) asparagine glycan. A Pentraxin (PTX) domain is found at 226–428 (DKFQLTFPLR…GATKWTFEAC (203 aa)). A disulfide bridge links C256 with C316. The Ca(2+) site is built by N280, E358, Q359, D360, and Q370.

Homooligomer or heterooligomer (probably pentamer) with neuronal pentraxin receptor (NPTXR). Requires Ca(2+) as cofactor.

The protein localises to the secreted. Its subcellular location is the cytoplasmic vesicle. It localises to the secretory vesicle. The protein resides in the endoplasmic reticulum. Its function is as follows. May be involved in mediating uptake of synaptic material during synapse remodeling or in mediating the synaptic clustering of AMPA glutamate receptors at a subset of excitatory synapses. The protein is Neuronal pentraxin-1 (NPTX1) of Homo sapiens (Human).